Consider the following 447-residue polypeptide: tRNA (guanine(37)-N(1))-methyltransferase (447 aa).

Residues histidine 241, 285 to 286 (DL), and 313 to 314 (DV) each bind S-adenosyl-L-methionine.

This sequence belongs to the class I-like SAM-binding methyltransferase superfamily. TRM5/TYW2 family. In terms of assembly, monomer.

It localises to the mitochondrion matrix. It is found in the nucleus. The protein localises to the cytoplasm. The catalysed reaction is guanosine(37) in tRNA + S-adenosyl-L-methionine = N(1)-methylguanosine(37) in tRNA + S-adenosyl-L-homocysteine + H(+). In terms of biological role, specifically methylates the N1 position of guanosine-37 in various cytoplasmic and mitochondrial tRNAs. Methylation is not dependent on the nature of the nucleoside 5' of the target nucleoside. This is the first step in the biosynthesis of wybutosine (yW), a modified base adjacent to the anticodon of tRNAs and required for accurate decoding. The chain is tRNA (guanine(37)-N(1))-methyltransferase from Giardia intestinalis (strain ATCC 50803 / WB clone C6) (Giardia lamblia).